The chain runs to 1128 residues: Exportin-6 (1128 aa).

Positions 31–97 (IEELLNSFAG…RSCLPKLLLS (67 aa)) constitute an Importin N-terminal domain.

Belongs to the exportin family.

It localises to the nucleus. It is found in the cytoplasm. Mediates the nuclear export of actin and profilin-actin complexes in somatic cells. This is Exportin-6 (xpo6) from Danio rerio (Zebrafish).